Reading from the N-terminus, the 346-residue chain is Deoxyhypusine hydroxylase (346 aa).

HEAT-like PBS-type repeat units lie at residues 71–100, 104–133, 213–242, 246–275, and 279–320; these read VLLR…LNDT, LMVR…LNDE, LKLR…LIKD, AIFR…LQNV, and EMVR…SKDA. Fe cation is bound by residues H75, H108, and E109. H250, H283, and E284 together coordinate Fe cation.

It belongs to the deoxyhypusine hydroxylase family. The cofactor is Fe(2+).

The catalysed reaction is [eIF5A protein]-deoxyhypusine + AH2 + O2 = [eIF5A protein]-hypusine + A + H2O. The protein operates within protein modification; eIF5A hypusination. Its function is as follows. Catalyzes the hydroxylation of the N(6)-(4-aminobutyl)-L-lysine intermediate produced by deoxyhypusine synthase/DHPS on a critical lysine of the eukaryotic translation initiation factor 5A/eIF-5A. This is the second step of the post-translational modification of that lysine into an unusual amino acid residue named hypusine. Hypusination is unique to mature eIF-5A factor and is essential for its function. This Plasmodium vivax (strain Salvador I) protein is Deoxyhypusine hydroxylase.